The following is a 109-amino-acid chain: Large ribosomal subunit protein uL22 (109 aa).

The protein belongs to the universal ribosomal protein uL22 family. Part of the 50S ribosomal subunit.

Functionally, this protein binds specifically to 23S rRNA; its binding is stimulated by other ribosomal proteins, e.g. L4, L17, and L20. It is important during the early stages of 50S assembly. It makes multiple contacts with different domains of the 23S rRNA in the assembled 50S subunit and ribosome. Its function is as follows. The globular domain of the protein is located near the polypeptide exit tunnel on the outside of the subunit, while an extended beta-hairpin is found that lines the wall of the exit tunnel in the center of the 70S ribosome. The sequence is that of Large ribosomal subunit protein uL22 from Bordetella avium (strain 197N).